Consider the following 353-residue polypeptide: Photosystem II protein D1 (353 aa).

At threonine 2 the chain carries N-acetylthreonine. Position 2 is a phosphothreonine (threonine 2). Helical transmembrane passes span 29–46 (YIGW…TATS), 118–133 (HFLL…EWEL), and 142–156 (WIAV…AATA). Position 118 (histidine 118) interacts with chlorophyll a. Residue tyrosine 126 coordinates pheophytin a. [CaMn4O5] cluster contacts are provided by aspartate 170 and glutamate 189. Residues 197–218 (FHMLGVAGVFGGSLFSAMHGSL) traverse the membrane as a helical segment. Histidine 198 provides a ligand contact to chlorophyll a. Residues histidine 215 and 264-265 (SF) contribute to the a quinone site. Residue histidine 215 participates in Fe cation binding. Position 272 (histidine 272) interacts with Fe cation. The chain crosses the membrane as a helical span at residues 274–288 (FLAAWPVVGIWFTAL). Histidine 332, glutamate 333, aspartate 342, and alanine 344 together coordinate [CaMn4O5] cluster. Positions 345–353 (AVEAPSTNG) are excised as a propeptide.

This sequence belongs to the reaction center PufL/M/PsbA/D family. In terms of assembly, PSII is composed of 1 copy each of membrane proteins PsbA, PsbB, PsbC, PsbD, PsbE, PsbF, PsbH, PsbI, PsbJ, PsbK, PsbL, PsbM, PsbT, PsbX, PsbY, PsbZ, Psb30/Ycf12, at least 3 peripheral proteins of the oxygen-evolving complex and a large number of cofactors. It forms dimeric complexes. The D1/D2 heterodimer binds P680, chlorophylls that are the primary electron donor of PSII, and subsequent electron acceptors. It shares a non-heme iron and each subunit binds pheophytin, quinone, additional chlorophylls, carotenoids and lipids. D1 provides most of the ligands for the Mn4-Ca-O5 cluster of the oxygen-evolving complex (OEC). There is also a Cl(-1) ion associated with D1 and D2, which is required for oxygen evolution. The PSII complex binds additional chlorophylls, carotenoids and specific lipids. is required as a cofactor. Post-translationally, tyr-161 forms a radical intermediate that is referred to as redox-active TyrZ, YZ or Y-Z. In terms of processing, C-terminally processed by CTPA; processing is essential to allow assembly of the oxygen-evolving complex and thus photosynthetic growth.

It is found in the plastid. The protein localises to the chloroplast thylakoid membrane. The enzyme catalyses 2 a plastoquinone + 4 hnu + 2 H2O = 2 a plastoquinol + O2. Its function is as follows. Photosystem II (PSII) is a light-driven water:plastoquinone oxidoreductase that uses light energy to abstract electrons from H(2)O, generating O(2) and a proton gradient subsequently used for ATP formation. It consists of a core antenna complex that captures photons, and an electron transfer chain that converts photonic excitation into a charge separation. The D1/D2 (PsbA/PsbD) reaction center heterodimer binds P680, the primary electron donor of PSII as well as several subsequent electron acceptors. This is Photosystem II protein D1 from Lepidium virginicum (Virginia pepperweed).